Here is a 176-residue protein sequence, read N- to C-terminus: MRITISGPPGSGTTSLSKHLAAEHNLKLISAGEVFRQLAREKGMDLAAFGELAENDPSIDLMIDARQKQIATEQDDIIVEGRLSGRMVEQADLRIWLNAPLTCRVGRIAFRDSVTCEEEAMTLTREREASEAKRYMMYYQIDISDLSSYHLVLNTERWSVGQLGLIVNCAIAAVRD.

Residue 7–15 coordinates ATP; that stretch reads GPPGSGTTS.

This sequence belongs to the cytidylate kinase family. Type 2 subfamily.

It is found in the cytoplasm. It catalyses the reaction CMP + ATP = CDP + ADP. It carries out the reaction dCMP + ATP = dCDP + ADP. This chain is Cytidylate kinase, found in Methanosphaerula palustris (strain ATCC BAA-1556 / DSM 19958 / E1-9c).